We begin with the raw amino-acid sequence, 308 residues long: GTP-binding protein RAD (308 aa).

Over residues 1-15 (MTLNGGSGASGSRGA) the composition is skewed to gly residues. Residues 1–86 (MTLNGGSGAS…SDSLSSGGSG (86 aa)) are disordered. The residue at position 24 (R24) is an Omega-N-methylarginine. Phosphoserine is present on S26. Over residues 57–82 (ATTAAGTRTQGQRLDWPEGSSDSLSS) the composition is skewed to low complexity. GTP-binding positions include 98–105 (GAPGVGKS) and 203–206 (NKSD). Residues 278 to 297 (AKRFLGRIVARNSRKMAFRA) form a calmodulin-binding region.

The protein belongs to the small GTPase superfamily. RGK family. In terms of assembly, interacts with Calmodulin preferentially in the inactive, GDP-bound form. Interacts with CAMK2D. Interacts with CACNB2; interaction may be involved in beta-adrenergic regulation of heart rate and contractile force. Interaction with CACNB2 regulates the trafficking of CACNA1C to the cell membrane. Phosphorylation at Ser-26, Ser-39, Ser-273 and Ser-301 may be involved in regulating inhibition of voltage-gated L-type Ca(2+) channels.

It localises to the cell membrane. Functionally, may regulate basal voltage-dependent L-type Ca(2+) currents and be required for beta-adrenergic augmentation of Ca(2+) influx in cardiomyocytes, thereby regulating increases in heart rate and contractile force. May play an important role in cardiac antiarrhythmia via the strong suppression of voltage-dependent L-type Ca(2+) currents. Regulates voltage-gated L-type calcium channel subunit alpha-1C trafficking to the cell membrane. Inhibits cardiac hypertrophy through the calmodulin-dependent kinase II (CaMKII) pathway. Inhibits phosphorylation and activation of CAMK2D. This is GTP-binding protein RAD (Rrad) from Mus musculus (Mouse).